Here is a 1520-residue protein sequence, read N- to C-terminus: MAAPVIIVGSHVWVEDPHLAWIDGEVTRIDGINVHVKTKKGKTVVTNVYFPKDTEAPSGGVDDMTKLSYLHEPGVLRNLETRYELNEIYTYTGNILIAVNPFQRLPHIYETDMMEQYKGIALGELSPHVFAIGDAAYRAMINEGKNNSILVSGESGAGKTETTKMLMRYLAFLGGRSGVEGRTVEQQVLESNPVLEAFGNAKTLRNNNSSRFGKFVEIQFDKNGRISGAAIRTYLLERSRVCQISDPERNYHCFYLLCAAPPEDIKKYKLENPHKFHYLNQSSCYKLDGVDDASEYLETRRAMDVVGISNEEQEAIFRVVAAILHLGNIDFGKGEEIDSSVIKDKDSRSHLNMAAELLMCNAQSLEDALIRRVMVTPEEIITRTLDPDNAIASRDTLAKTIYSHLFDWIVNKINTSIGQDPRSKSIIGVLDIYGFESFKCNSFEQFCINFTNEKLQQHFNQHVFKMEQEEYTKEEIAWSYIEFIDNQDVLELIEKKPGGIISLLDEACMFPKSTHETFSQKLFQTFKEHERFAKPKLSRTDFTISHYAGEVTYQSNHFIDKNKDYIVAEHQALFTASNCKFVAGLFHALHEDSSRSSKFSSIGSRFKQQLHSLMESLNGTEPHYIRCIKPNNVLKPGIFENFNVIHQLRCGGVLEAIRISCAGYPTRLAFYDFLDRFGLLAPEVLEGNYDDKVACQMILDKKSLTDYQIGKTKIFLRAGQMAELDARRAEVLGNAARVIQRQFRTCMARKNYRSIRNAAIVLQSFLRGEIARAVHKKLRIEAAALRVQKNFRRYVDRKSFVTTRSSTIVLQTGLRAMIARSEFRLRRQRKAAIVLQAHWRGRQAFSYYTRLQKAAIVTQCAWRCRLARRELRMLKMAARDTGALKDAKNKLEQRVEELSLRLHLEKRLRTDLEEAKVQEVAKLQEALHTMRLQLKETTAMVVKEQEAARVAIEEASSVNKEPVVVEDTEKIDSLSNEIDRLKGLLSSETHKADEAQHAYQSALVQNEELCKKLEEAGRKIDQLQDSVQRFQEKVFSLESENKVLRQQTLTISPTTRALALRPKTTIIQRTPEKDTFSNGETTQLQEPETEDRPQKSLNQKQQENQELLLKSISEDIGFSEGKPVAACLIYKCLIHWRSFEVERTSIFNRIIETIASAIEMQENSDVLCYWLSNSATLLMFLQRTLKAGATGSITTPRRRGMPSSLFGRVSQSFRGSPQSAGFPFMTGRAIGGGLDELRQVEAKYPALLFKQQLTAFLEKIYGMIRDKMKKEISPLLASCIQVPRTPRSGLVKGRSQNTQNNVVAPKPMIAHWQNIVTCLNGHLRTMRANYVPSLLISKVFGQIFSFINVQLFNSLLLRRECCSFSNGEYVKTGLAELEKWCHDATEEFVGSAWDELKHIRQAVGFLVIHQKPKKSLKEITTELCPVLSIQQLYRISTMYWDDKYGTHSVSTEVIATMRAEVSDVSKSAISNSFLLDDDSSIPFSLDDISKSMQNVEVAEVDPPPLIRQNSNFMFLLERSD.

One can recognise a Myosin N-terminal SH3-like domain in the interval 7–56 (IVGSHVWVEDPHLAWIDGEVTRIDGINVHVKTKKGKTVVTNVYFPKDTEA). Positions 59–729 (GGVDDMTKLS…QMAELDARRA (671 aa)) constitute a Myosin motor domain. Residues 153 to 160 (GESGAGKT) and 206 to 214 (NNNSSRFGK) contribute to the ATP site. 4 actin-binding regions span residues 492–526 (LIEK…FQTF), 528–551 (EHER…AGEV), 586–610 (FHAL…KQQL), and 610–632 (LHSL…KPNN). IQ domains lie at 732–761 (LGNA…AAIV), 755–784 (IRNA…EAAA), 780–809 (IEAA…STIV), 803–832 (TRSS…RKAA), 828–857 (QRKA…AAIV), and 851–880 (LQKA…AARD). Residues 881–1047 (TGALKDAKNK…ESENKVLRQQ (167 aa)) are a coiled coil. Residues 1062-1100 (PKTTIIQRTPEKDTFSNGETTQLQEPETEDRPQKSLNQK) are disordered. Residues 1076 to 1086 (FSNGETTQLQE) show a composition bias toward polar residues. Residues 1148–1463 (NRIIETIASA…IATMRAEVSD (316 aa)) enclose the Dilute domain.

It belongs to the TRAFAC class myosin-kinesin ATPase superfamily. Myosin family. Plant myosin class XI subfamily. Homodimer. Interacts with MYOB1 and MYOB2. Interacts with PHOX1.

The protein localises to the cytoplasm. Functionally, myosin heavy chain that is required for the cell cycle-regulated transport of various organelles and proteins for their segregation. Functions by binding with its tail domain to receptor proteins on organelles and exerting force with its N-terminal motor domain against actin filaments, thereby transporting its cargo along polarized actin cables. Contributes to the trafficking of Golgi stacks, mitochondria and peroxisomes. Required for development of pavement cells, trichomes, and stigmatic papillae. The chain is Myosin-5 (XI-1) from Arabidopsis thaliana (Mouse-ear cress).